Here is a 273-residue protein sequence, read N- to C-terminus: Urease accessory protein UreD (273 aa).

The protein belongs to the UreD family. In terms of assembly, ureD, UreF and UreG form a complex that acts as a GTP-hydrolysis-dependent molecular chaperone, activating the urease apoprotein by helping to assemble the nickel containing metallocenter of UreC. The UreE protein probably delivers the nickel.

Its subcellular location is the cytoplasm. Required for maturation of urease via the functional incorporation of the urease nickel metallocenter. The protein is Urease accessory protein UreD of Rhizobium etli (strain ATCC 51251 / DSM 11541 / JCM 21823 / NBRC 15573 / CFN 42).